We begin with the raw amino-acid sequence, 382 residues long: RNA exonuclease 3 (382 aa).

The region spanning 223–369 (VLALDCEMAY…EDAIAAMDVV (147 aa)) is the Exonuclease domain.

It belongs to the REXO1/REXO3 family.

It is found in the cytoplasm. It localises to the nucleus. 3' to 5' exoribonuclease required for proper 3' end maturation of MRP RNA and of the U5L snRNA. The protein is RNA exonuclease 3 (REX3) of Eremothecium gossypii (strain ATCC 10895 / CBS 109.51 / FGSC 9923 / NRRL Y-1056) (Yeast).